We begin with the raw amino-acid sequence, 398 residues long: Argininosuccinate synthase (398 aa).

An ATP-binding site is contributed by 8 to 16; that stretch reads AYSGGLDTS. Tyr87 is an L-citrulline binding site. Residue Gly117 coordinates ATP. Residues Thr119, Asn123, and Asp124 each contribute to the L-aspartate site. Asn123 serves as a coordination point for L-citrulline. L-citrulline is bound by residues Arg127, Ser175, Glu260, and Tyr272.

Belongs to the argininosuccinate synthase family. Type 1 subfamily. In terms of assembly, homotetramer.

It localises to the cytoplasm. It carries out the reaction L-citrulline + L-aspartate + ATP = 2-(N(omega)-L-arginino)succinate + AMP + diphosphate + H(+). The protein operates within amino-acid biosynthesis; L-arginine biosynthesis; L-arginine from L-ornithine and carbamoyl phosphate: step 2/3. In Mycobacterium ulcerans (strain Agy99), this protein is Argininosuccinate synthase.